An 827-amino-acid chain; its full sequence is Cadherin-17 (827 aa).

The first 21 residues, 1–21 (MVSAQLHFLCLLTLYLTGAYG), serve as a signal peptide directing secretion. The Extracellular portion of the chain corresponds to 22 to 786 (QEGKFSGPLK…NQVGIPTVGM (765 aa)). 7 Cadherin domains span residues 29–127 (PLKP…TFLQ), 128–243 (TKYE…APEP), 244–339 (VEIR…PPTC), 340–448 (LSQV…IPIF), 449–565 (ERSD…VPVF), 566–666 (PQQI…PPRL), and 667–776 (AKDY…RPAG). 7 N-linked (GlcNAc...) asparagine glycosylation sites follow: Asn148, Asn183, Asn249, Asn418, Asn545, Asn573, and Asn721. A helical membrane pass occupies residues 787-807 (AVGILLTTFLVIGIILAVVFI). At 808 to 827 (RMRKDKVEDPQSPENKPLRS) the chain is on the cytoplasmic side.

Liver and intestine.

The protein resides in the cell membrane. In terms of biological role, cadherins are calcium-dependent cell adhesion proteins. They preferentially interact with themselves in a homophilic manner in connecting cells; cadherins may thus contribute to the sorting of heterogeneous cell types. LI-cadherin may have a role in the morphological organization of liver and intestine. This chain is Cadherin-17 (Cdh17), found in Rattus norvegicus (Rat).